The sequence spans 347 residues: Methionine import ATP-binding protein MetN (347 aa).

Residues I2 to L241 enclose the ABC transporter domain. Position 38-45 (G38–S45) interacts with ATP.

It belongs to the ABC transporter superfamily. Methionine importer (TC 3.A.1.24) family. In terms of assembly, the complex is composed of two ATP-binding proteins (MetN), two transmembrane proteins (MetI) and a solute-binding protein (MetQ).

It is found in the cell inner membrane. The enzyme catalyses L-methionine(out) + ATP + H2O = L-methionine(in) + ADP + phosphate + H(+). It carries out the reaction D-methionine(out) + ATP + H2O = D-methionine(in) + ADP + phosphate + H(+). Part of the ABC transporter complex MetNIQ involved in methionine import. Responsible for energy coupling to the transport system. In Chromohalobacter salexigens (strain ATCC BAA-138 / DSM 3043 / CIP 106854 / NCIMB 13768 / 1H11), this protein is Methionine import ATP-binding protein MetN.